Here is a 175-residue protein sequence, read N- to C-terminus: 19.0 kDa class II heat shock protein (175 aa).

A sHSP domain is found at 42 to 165 (DRRAMANTPM…KPRVVEVKVA (124 aa)). The disordered stretch occupies residues 145 to 175 (TVDKKPPPEPKKPRVVEVKVAGAGEPKGKGK). Basic and acidic residues predominate over residues 146 to 161 (VDKKPPPEPKKPRVVE).

It belongs to the small heat shock protein (HSP20) family. May form oligomeric structures.

The protein localises to the cytoplasm. This is 19.0 kDa class II heat shock protein (HSP19.0) from Oryza sativa subsp. japonica (Rice).